Here is a 367-residue protein sequence, read N- to C-terminus: Peptide chain release factor 2 (367 aa).

Q254 bears the N5-methylglutamine mark.

It belongs to the prokaryotic/mitochondrial release factor family. In terms of processing, methylated by PrmC. Methylation increases the termination efficiency of RF2.

It is found in the cytoplasm. Its function is as follows. Peptide chain release factor 2 directs the termination of translation in response to the peptide chain termination codons UGA and UAA. In Janthinobacterium sp. (strain Marseille) (Minibacterium massiliensis), this protein is Peptide chain release factor 2.